The primary structure comprises 131 residues: Single-stranded DNA-binding protein 2 (131 aa).

In terms of domain architecture, SSB spans 1 to 103 (MYNKVIMIGR…VLASSFQLLE (103 aa)). An Important for interaction with partner proteins motif is present at residues 126-131 (EEELPF).

In terms of assembly, homotetramer.

Functionally, plays an important role in DNA replication, recombination and repair. Binds to ssDNA and to an array of partner proteins to recruit them to their sites of action during DNA metabolism. The protein is Single-stranded DNA-binding protein 2 (ssb2) of Streptococcus agalactiae serotype V (strain ATCC BAA-611 / 2603 V/R).